A 570-amino-acid polypeptide reads, in one-letter code: Sulfite reductase [NADPH] hemoprotein beta-component (570 aa).

Residues Cys-434, Cys-440, Cys-479, and Cys-483 each contribute to the [4Fe-4S] cluster site. Cys-483 serves as a coordination point for siroheme.

It belongs to the nitrite and sulfite reductase 4Fe-4S domain family. As to quaternary structure, alpha(8)-beta(8). The alpha component is a flavoprotein, the beta component is a hemoprotein. It depends on siroheme as a cofactor. Requires [4Fe-4S] cluster as cofactor.

The catalysed reaction is hydrogen sulfide + 3 NADP(+) + 3 H2O = sulfite + 3 NADPH + 4 H(+). The protein operates within sulfur metabolism; hydrogen sulfide biosynthesis; hydrogen sulfide from sulfite (NADPH route): step 1/1. In terms of biological role, component of the sulfite reductase complex that catalyzes the 6-electron reduction of sulfite to sulfide. This is one of several activities required for the biosynthesis of L-cysteine from sulfate. The polypeptide is Sulfite reductase [NADPH] hemoprotein beta-component (Salmonella agona (strain SL483)).